The chain runs to 386 residues: Agamous-like MADS-box protein AGL30 (386 aa).

The region spanning 1-53 (MGRVKLKIKKLENTNGRQSTFAKRKNGILKKANELSILCDIDIVLLMFSPTGK) is the MADS-box domain. The tract at residues 341 to 360 (PDSSAYNDNTNQTRFGSSSS) is disordered. The span at 344–356 (SAYNDNTNQTRFG) shows a compositional bias: polar residues.

As to quaternary structure, forms heterodimers with AGL66 and AGL104. Expressed in pollen.

It is found in the nucleus. Probable transcription factor that forms heterodimers with the MADS-box proteins AGL66 and AGL104 and is involved in the regulation of pollen maturation at the late stages of pollen development and pollen tube growth. This is Agamous-like MADS-box protein AGL30 from Arabidopsis thaliana (Mouse-ear cress).